The sequence spans 68 residues: Copper transport protein ATOX1 (68 aa).

The HMA domain maps to 1 to 63; sequence MPKHEFSVDM…TLNKTGKAVS (63 aa). Cu cation-binding residues include C12 and C15. At S47 the chain carries Phosphoserine. K60 bears the N6-acetyllysine mark.

The protein belongs to the ATX1 family. In terms of assembly, homodimer. Interacts with ATP7B. Interacts with ATP7A. Interacts (via dimer form) with SLC31A1 (via C-terminal domain); this interaction improves ATOX1 stability and controls intracellular Cu(I) levels.

In terms of biological role, binds and deliver cytosolic copper to the copper ATPase proteins. May be important in cellular antioxidant defense. This Rattus norvegicus (Rat) protein is Copper transport protein ATOX1.